A 355-amino-acid chain; its full sequence is Dual-specificity RNA methyltransferase RlmN (355 aa).

Residue E86 is the Proton acceptor of the active site. The Radical SAM core domain occupies 105-338; sequence KEARYTVCVS…CTIRESKGLD (234 aa). C112 and C343 are joined by a disulfide. [4Fe-4S] cluster is bound by residues C119, C123, and C126. S-adenosyl-L-methionine contacts are provided by residues 169–170, S201, 224–226, and N300; these read GE and SLH. The active-site S-methylcysteine intermediate is C343.

It belongs to the radical SAM superfamily. RlmN family. It depends on [4Fe-4S] cluster as a cofactor.

The protein localises to the cytoplasm. The enzyme catalyses adenosine(2503) in 23S rRNA + 2 reduced [2Fe-2S]-[ferredoxin] + 2 S-adenosyl-L-methionine = 2-methyladenosine(2503) in 23S rRNA + 5'-deoxyadenosine + L-methionine + 2 oxidized [2Fe-2S]-[ferredoxin] + S-adenosyl-L-homocysteine. It carries out the reaction adenosine(37) in tRNA + 2 reduced [2Fe-2S]-[ferredoxin] + 2 S-adenosyl-L-methionine = 2-methyladenosine(37) in tRNA + 5'-deoxyadenosine + L-methionine + 2 oxidized [2Fe-2S]-[ferredoxin] + S-adenosyl-L-homocysteine. Specifically methylates position 2 of adenine 2503 in 23S rRNA and position 2 of adenine 37 in tRNAs. m2A2503 modification seems to play a crucial role in the proofreading step occurring at the peptidyl transferase center and thus would serve to optimize ribosomal fidelity. The chain is Dual-specificity RNA methyltransferase RlmN from Nitratiruptor sp. (strain SB155-2).